Reading from the N-terminus, the 640-residue chain is Protein UL35 (640 aa).

3 disordered regions span residues 353–373 (ERGEFGDEDEEQENDGEPREA), 500–571 (ASSS…PRQR), and 586–640 (AYSH…LRHL). Positions 358–367 (GDEDEEQEND) are enriched in acidic residues. The span at 500–562 (ASSSSASSSS…LSGSHGISSA (63 aa)) shows a compositional bias: low complexity. Residues 588–598 (SHHRRHRRRRS) are compositionally biased toward basic residues. The segment covering 631 to 640 (DDLAENLRHL) has biased composition (basic and acidic residues).

Belongs to the herpesviridae pp85 family. In terms of assembly, interacts with UL82. Interacts with isoform UL35A. Interacts with host UBP7; this interaction significantly inhibits the ability of USP7 to form nuclear bodies. Interacts with host DCAF1 (via C-terminus). Interacts with host SNX5; this interaction allows proper gB localization during viral assembly. Interacts with host TBK1; this interaction prevents type I interferon production. Interacts with UL82. Interacts with isoform UL35. Interacts with host UBP7; this interaction significantly inhibits the ability of USP7 to form nuclear bodies. Interacts with host SNX5; this interaction allows proper gB localization during viral assembly.

The protein resides in the virion tegument. The protein localises to the host nucleus. Its subcellular location is the host cytoplasm. In terms of biological role, plays important role in immediate-early gene expression through interaction with UL82. Forms nuclear bodies in host nucleus, independently of PML. In turn, UL35 nuclear bodies associate with and remodel PML bodies. Through interaction with host DCAF1, causes cells to accumulate in the G2 phase of the cell cycle by inducing a DNA damage response. Regulates viral assembly by controlling the localization of the essential gB through regulation of a retrograde transport pathway. This modulation occurs via binding and inhibition of host sorting nexin 5/SNX5. Also plays a role in the inhibition of pattern recognition receptor-mediated type I interferon signaling at the level of TBK1. Promotes cytoplasmic UL82 accumulation and inhibits UL35-containing nuclear bodies formation. Regulates viral assembly by controlling the localization of the essential gB through regulation of a retrograde transport pathway. This modulation occurs via binding and inhibition of host sorting nexin 5/SNX5. The chain is Protein UL35 (UL35) from Homo sapiens (Human).